Here is a 291-residue protein sequence, read N- to C-terminus: 4-hydroxy-tetrahydrodipicolinate synthase (291 aa).

Pyruvate is bound at residue threonine 45. The Proton donor/acceptor role is filled by tyrosine 133. The active-site Schiff-base intermediate with substrate is lysine 161. Isoleucine 203 serves as a coordination point for pyruvate.

The protein belongs to the DapA family. In terms of assembly, homotetramer; dimer of dimers.

The protein localises to the cytoplasm. It carries out the reaction L-aspartate 4-semialdehyde + pyruvate = (2S,4S)-4-hydroxy-2,3,4,5-tetrahydrodipicolinate + H2O + H(+). It participates in amino-acid biosynthesis; L-lysine biosynthesis via DAP pathway; (S)-tetrahydrodipicolinate from L-aspartate: step 3/4. Functionally, catalyzes the condensation of (S)-aspartate-beta-semialdehyde [(S)-ASA] and pyruvate to 4-hydroxy-tetrahydrodipicolinate (HTPA). This chain is 4-hydroxy-tetrahydrodipicolinate synthase, found in Saccharophagus degradans (strain 2-40 / ATCC 43961 / DSM 17024).